Reading from the N-terminus, the 467-residue chain is Glutamyl-tRNA(Gln) amidotransferase subunit A (467 aa).

Catalysis depends on charge relay system residues Lys57 and Ser132. Ser156 serves as the catalytic Acyl-ester intermediate.

The protein belongs to the amidase family. GatA subfamily. Heterotrimer of A, B and C subunits.

It catalyses the reaction L-glutamyl-tRNA(Gln) + L-glutamine + ATP + H2O = L-glutaminyl-tRNA(Gln) + L-glutamate + ADP + phosphate + H(+). Functionally, allows the formation of correctly charged Gln-tRNA(Gln) through the transamidation of misacylated Glu-tRNA(Gln) in organisms which lack glutaminyl-tRNA synthetase. The reaction takes place in the presence of glutamine and ATP through an activated gamma-phospho-Glu-tRNA(Gln). This is Glutamyl-tRNA(Gln) amidotransferase subunit A from Pseudothermotoga lettingae (strain ATCC BAA-301 / DSM 14385 / NBRC 107922 / TMO) (Thermotoga lettingae).